A 129-amino-acid polypeptide reads, in one-letter code: Small ribosomal subunit protein uS9 (129 aa).

Belongs to the universal ribosomal protein uS9 family.

This is Small ribosomal subunit protein uS9 from Helicobacter pylori (strain HPAG1).